The sequence spans 107 residues: U1-lycotoxin-Ls1e (107 aa).

Positions 1 to 20 (MMKVLVVVALLVTLISYSSS) are cleaved as a signal peptide. Residues 21 to 41 (EGIDDLEADELLSLMANEQTR) constitute a propeptide that is removed on maturation. Intrachain disulfides connect Cys-44-Cys-59, Cys-51-Cys-68, Cys-58-Cys-86, and Cys-70-Cys-84.

Belongs to the neurotoxin 19 (CSTX) family. 04 (U1-Lctx) subfamily. Expressed by the venom gland.

The protein localises to the secreted. The chain is U1-lycotoxin-Ls1e from Lycosa singoriensis (Wolf spider).